The chain runs to 256 residues: uncharacterized protein (256 aa).

Residues 213–243 are a coiled coil; sequence TMSMEAKLEAAKKTLEKFKQEAASKRAKRTK. The segment at 231–256 is disordered; that stretch reads KQEAASKRAKRTKPSGSKTTRSTGRK. A compositionally biased stretch (polar residues) spans 244 to 256; the sequence is PSGSKTTRSTGRK.

This is an uncharacterized protein from Acanthamoeba polyphaga (Amoeba).